Consider the following 176-residue polypeptide: Nucleoside triphosphate/diphosphate phosphatase (176 aa).

The Proton donor role is filled by arginine 23. Positions 87, 103, 105, 107, 120, and 123 each coordinate Mg(2+).

The protein belongs to the Ntdp family. Mg(2+) serves as cofactor.

The catalysed reaction is a ribonucleoside 5'-triphosphate + H2O = a ribonucleoside 5'-diphosphate + phosphate + H(+). It carries out the reaction a ribonucleoside 5'-diphosphate + H2O = a ribonucleoside 5'-phosphate + phosphate + H(+). In terms of biological role, has nucleoside phosphatase activity towards nucleoside triphosphates and nucleoside diphosphates. The chain is Nucleoside triphosphate/diphosphate phosphatase from Bacillus cereus (strain AH820).